The chain runs to 248 residues: Probable transcriptional regulatory protein PSPA7_4544 (248 aa).

The protein belongs to the TACO1 family.

It localises to the cytoplasm. This Pseudomonas paraeruginosa (strain DSM 24068 / PA7) (Pseudomonas aeruginosa (strain PA7)) protein is Probable transcriptional regulatory protein PSPA7_4544.